Here is a 265-residue protein sequence, read N- to C-terminus: ATP synthase subunit a (265 aa).

Helical transmembrane passes span 26 to 46, 88 to 108, 132 to 152, 168 to 188, 195 to 217, and 231 to 251; these read VHLD…FFFY, IGSL…IDLI, DISA…FYTI, PFNH…TLLA, FRLF…MYMA, and LIWA…FMML.

It belongs to the ATPase A chain family. As to quaternary structure, F-type ATPases have 2 components, CF(1) - the catalytic core - and CF(0) - the membrane proton channel. CF(1) has five subunits: alpha(3), beta(3), gamma(1), delta(1), epsilon(1). CF(0) has three main subunits: a(1), b(2) and c(9-12). The alpha and beta chains form an alternating ring which encloses part of the gamma chain. CF(1) is attached to CF(0) by a central stalk formed by the gamma and epsilon chains, while a peripheral stalk is formed by the delta and b chains.

The protein resides in the cell inner membrane. Functionally, key component of the proton channel; it plays a direct role in the translocation of protons across the membrane. This is ATP synthase subunit a from Histophilus somni (strain 2336) (Haemophilus somnus).